A 793-amino-acid chain; its full sequence is E3 UFM1-protein ligase 1 (793 aa).

Alanine 2 carries the N-acetylalanine modification. The interval 2-200 is mediates interaction with DDRGK1; that stretch reads ADAWEEIRRL…RGLFSAITRP (199 aa). A required for E3 UFM1-protein ligase activity region spans residues 2–212; sequence ADAWEEIRRL…VNSLISKYGF (211 aa). The tract at residues 121 to 250 is involved in CDK5RAP3-binding; that stretch reads DRLAEEVNDK…KAVFVPDIYS (130 aa). The interval 200–400 is mediates interaction with TRIP4; it reads PTAVNSLISK…NPVHLITEED (201 aa). Residues 407-473 form a disordered region; the sequence is LESVSTSKKD…SSHTGKKKPE (67 aa). Omega-N-methylarginine is present on arginine 433. Serine 458 carries the post-translational modification Phosphoserine. The tract at residues 490–684 is mediates interaction with CDK5RAP3; sequence IQDAPEEFIS…QLKVTEDPAL (195 aa). Threonine 536 is subject to Phosphothreonine.

Belongs to the UFL1 family. In terms of assembly, catalytic component of the UFM1 ribosome E3 ligase (UREL) complex, composed of UFL1, DDRGK1 and CDK5RAP3. Interacts with E2-like enzyme UFC1. Interacts with RELA. Interacts with NBN; promoting recruitment to double-strand breaks following DNA damage. Interacts (when phosphorylated) with YWHAG/14-3-3-gamma; sequestering UFL1 and preventing its association with PDCD1/PD-1 substrate. In terms of processing, ubiquitinated, leading to its degradation by the proteasome. Interaction with CDK5RAP3 protects both proteins against ubiquitination and degradation via the proteasome. Phosphorylation at Thr-536 by AMPK promotes its interaction with YWHAG/14-3-3-gamma, thereby preventing UFL1 association with PDCD1/PD-1 substrate.

The protein resides in the endoplasmic reticulum membrane. It localises to the cytoplasm. It is found in the cytosol. Its subcellular location is the nucleus. The protein localises to the chromosome. Its function is as follows. E3 protein ligase that mediates ufmylation, the covalent attachment of the ubiquitin-like modifier UFM1 to lysine residues on target proteins, and which plays a key role in various processes, such as ribosome recycling, response to DNA damage, interferon response or reticulophagy (also called ER-phagy). Catalyzes ufmylation of many protein, such as CD274/PD-L1, CDK5RAP3, CYB5R3, DDRGK1, EIF6, histone H4, MRE11, P4HB, PDCD1/PD-1, TRIP4, RPN1, RPS20/uS10, RPL10/uL16, RPL26/uL24, SYVN1/HRD1 and TP53/p53. As part of the UREL complex, plays a key role in ribosome recycling by catalyzing mono-ufmylation of RPL26/uL24 subunit of the 60S ribosome. Ufmylation of RPL26/uL24 occurs on free 60S ribosomes following ribosome dissociation: it weakens the junction between post-termination 60S subunits and SEC61 translocons, promoting release and recycling of the large ribosomal subunit from the endoplasmic reticulum membrane. Ufmylation of RPL26/uL24 and subsequent 60S ribosome recycling either take place after normal termination of translation or after ribosome stalling during cotranslational translocation at the endoplasmic reticulum. Involved in reticulophagy in response to endoplasmic reticulum stress by mediating ufmylation of proteins such as CYB5R3 and RPN1, thereby promoting lysosomal degradation of ufmylated proteins. Ufmylation in response to endoplasmic reticulum stress is essential for processes such as hematopoiesis, blood vessel morphogenesis or inflammatory response. Mediates ufmylation of DDRGK1 and CDK5RAP3; the role of these modifications is however unclear: as both DDRGK1 and CDK5RAP3 act as substrate adapters for ufmylation, it is uncertain whether ufmylation of these proteins is, a collateral effect or is required for ufmylation. Acts as a negative regulator of T-cell activation by mediating ufmylation and stabilization of PDCD1/PD-1. Also involved in the response to DNA damage: recruited to double-strand break sites following DNA damage and mediates monoufmylation of histone H4 and ufmylation of MRE11. Mediates ufmylation of TP53/p53, promoting its stability. Catalyzes ufmylation of TRIP4, thereby playing a role in nuclear receptor-mediated transcription. Required for hematopoietic stem cell function and hematopoiesis. This Macaca fascicularis (Crab-eating macaque) protein is E3 UFM1-protein ligase 1.